A 190-amino-acid polypeptide reads, in one-letter code: dCTP deaminase (190 aa).

DCTP is bound by residues 111–116 (KSTYAR), 135–137 (TLE), Q156, Y172, and Q182. The Proton donor/acceptor role is filled by E137.

It belongs to the dCTP deaminase family. In terms of assembly, homotrimer.

It catalyses the reaction dCTP + H2O + H(+) = dUTP + NH4(+). Its pathway is pyrimidine metabolism; dUMP biosynthesis; dUMP from dCTP (dUTP route): step 1/2. Its function is as follows. Catalyzes the deamination of dCTP to dUTP. The protein is dCTP deaminase of Stenotrophomonas maltophilia (strain R551-3).